The primary structure comprises 469 residues: 3-isopropylmalate dehydratase large subunit (469 aa).

[4Fe-4S] cluster-binding residues include Cys347, Cys407, and Cys410.

It belongs to the aconitase/IPM isomerase family. LeuC type 1 subfamily. As to quaternary structure, heterodimer of LeuC and LeuD. [4Fe-4S] cluster is required as a cofactor.

It catalyses the reaction (2R,3S)-3-isopropylmalate = (2S)-2-isopropylmalate. It participates in amino-acid biosynthesis; L-leucine biosynthesis; L-leucine from 3-methyl-2-oxobutanoate: step 2/4. Functionally, catalyzes the isomerization between 2-isopropylmalate and 3-isopropylmalate, via the formation of 2-isopropylmaleate. In Prochlorococcus marinus (strain NATL2A), this protein is 3-isopropylmalate dehydratase large subunit.